The chain runs to 412 residues: Carboxypeptidase B1 (412 aa).

A signal peptide spans 1-18 (MIPRIVVVLLSVLAVVTA). Residues 19 to 75 (RRSYEGYKVYGIVPESPDEAEILYQIRQSNPDLDFWHLTKQPGDEARVLVAPKDQRS) constitute a propeptide, activation peptide. In terms of domain architecture, Peptidase M14 spans 118–408 (SYLRHNEINE…VGIKAMALKV (291 aa)). His-175 and Glu-178 together coordinate Zn(2+). 175–178 (HARE) contacts a peptide. Asn-205 carries an N-linked (GlcNAc...) asparagine glycan. A peptide contacts are provided by residues Arg-230 and 246 to 247 (NR). Cysteines 240 and 263 form a disulfide. His-299 is a binding site for Zn(2+). Residues 300–301 (SY) and Tyr-351 contribute to the a peptide site. Glu-374 acts as the Proton donor/acceptor in catalysis. Residue Asn-395 is glycosylated (N-linked (GlcNAc...) asparagine).

It belongs to the peptidase M14 family. As to quaternary structure, monomer. Interacts with Dengue virus type 2 (DENV2, MY89-88549 strain) envelope protein E. Interacts with Dengue virus envelope protein E type 3, type 2, type 4 and type 1 with decreasing strength. Zn(2+) serves as cofactor. Expressed in midgut (at protein level).

It is found in the endoplasmic reticulum. It catalyses the reaction Preferential release of a C-terminal lysine or arginine amino acid.. With respect to regulation, inhibited by S.tuberosum metallocarboxypeptidase inhibitor. Functionally, carboxypeptidase that preferentially hydrolyzes arginine and lysine residues at the C-terminus. During infection by dengue virus, may play a role in preventing viral packaging, maturation, and release from the midgut. This Aedes aegypti (Yellowfever mosquito) protein is Carboxypeptidase B1.